We begin with the raw amino-acid sequence, 721 residues long: Polyribonucleotide nucleotidyltransferase (721 aa).

Positions 495 and 501 each coordinate Mg(2+). A KH domain is found at 562–621 (PRLLSFRIDPELIGTVIGPGGRTIKGITERTNTKIDIEDGGIVTIASHDGAAAEEAQKII). An S1 motif domain is found at 631-699 (GEIFPGVVTR…SRGRINLTLR (69 aa)). A disordered region spans residues 702–721 (GQNGGMSYPEPTPTPVAPLS). Residues 711 to 721 (EPTPTPVAPLS) are compositionally biased toward pro residues.

It belongs to the polyribonucleotide nucleotidyltransferase family. Mg(2+) serves as cofactor.

Its subcellular location is the cytoplasm. The catalysed reaction is RNA(n+1) + phosphate = RNA(n) + a ribonucleoside 5'-diphosphate. In terms of biological role, involved in mRNA degradation. Catalyzes the phosphorolysis of single-stranded polyribonucleotides processively in the 3'- to 5'-direction. The chain is Polyribonucleotide nucleotidyltransferase from Prochlorococcus marinus (strain MIT 9301).